We begin with the raw amino-acid sequence, 441 residues long: Ribulose bisphosphate carboxylase/oxygenase activase, chloroplastic (441 aa).

167–174 (VWGGKGQG) is an ATP binding site.

It belongs to the RuBisCO activase family.

Its subcellular location is the plastid. It is found in the chloroplast stroma. In terms of biological role, activation of RuBisCO (ribulose-1,5-bisphosphate carboxylase/oxygenase; EC 4.1.1.39) involves the ATP-dependent carboxylation of the epsilon-amino group of lysine leading to a carbamate structure. This is Ribulose bisphosphate carboxylase/oxygenase activase, chloroplastic (RCA1) from Phaseolus vulgaris (Kidney bean).